Consider the following 731-residue polypeptide: Anaphase-promoting complex subunit 2 (731 aa).

The protein belongs to the cullin family. In terms of assembly, the APC/C is probably composed of at least 12 subunits: apc-2, apc-10, apc-11, cdc-26, emb-1, emb-27, emb-30, mat-1, mat-2, mat-3, such-1 and gfi-3.

It participates in protein modification; protein ubiquitination. Functionally, probable component of the anaphase promoting complex/cyclosome (APC/C), a cell cycle-regulated ubiquitin ligase that controls progression through mitosis and the G1 phase of the cell cycle. The APC/C complex acts by mediating ubiquitination and subsequent degradation of target proteins. Developmental role in early embryogenesis and the metaphase to anaphase transition in meiosis and mitosis. In Caenorhabditis elegans, this protein is Anaphase-promoting complex subunit 2.